A 187-amino-acid chain; its full sequence is Ribosome-recycling factor (187 aa).

The protein belongs to the RRF family.

Its subcellular location is the cytoplasm. In terms of biological role, responsible for the release of ribosomes from messenger RNA at the termination of protein biosynthesis. May increase the efficiency of translation by recycling ribosomes from one round of translation to another. This chain is Ribosome-recycling factor, found in Roseobacter denitrificans (strain ATCC 33942 / OCh 114) (Erythrobacter sp. (strain OCh 114)).